Consider the following 522-residue polypeptide: Transactivator/viroplasmin protein (522 aa).

The segment covering 487–500 has biased composition (basic and acidic residues); the sequence is KDASTDRGTTDKDG. Residues 487–522 form a disordered region; that stretch reads KDASTDRGTTDKDGPPPTRSIVEKEDVPTTSSKQVD.

The protein belongs to the caulimoviridae viroplasmin family.

It localises to the host cytoplasm. Functionally, enhances the ribosomal termination-reinitiation event leading to the translation of major open reading frames on the polycistronic viral RNAs. The polypeptide is Transactivator/viroplasmin protein (Arabidopsis thaliana (Mouse-ear cress)).